Reading from the N-terminus, the 92-residue chain is Probable glutathione transferase (92 aa).

The GST N-terminal domain occupies 1-71 (RTCPYAQRAR…YLEEAFPDPP (71 aa)). Catalysis depends on cysteine 3, which acts as the Nucleophile. Residues lysine 30, valine 43, and 55–56 (ES) contribute to the glutathione site.

Belongs to the GST superfamily. Omega family.

It carries out the reaction RX + glutathione = an S-substituted glutathione + a halide anion + H(+). The enzyme catalyses L-dehydroascorbate + 2 glutathione = glutathione disulfide + L-ascorbate. It catalyses the reaction methylarsonate + 2 glutathione + H(+) = methylarsonous acid + glutathione disulfide + H2O. Exhibits glutathione-dependent thiol transferase activity. Has dehydroascorbate reductase activity and may contribute to the recycling of ascorbic acid. Participates in the biotransformation of inorganic arsenic and reduces monomethylarsonic acid (MMA). The sequence is that of Probable glutathione transferase from Aplysia californica (California sea hare).